The primary structure comprises 367 residues: Putrescine/agmatine-binding protein (367 aa).

A signal peptide spans 1–19; that stretch reads MKKVCALALSILTTIGATA.

Belongs to the bacterial solute-binding protein 1 family.

It localises to the periplasm. Binds putrescine and agmatine. The sequence is that of Putrescine/agmatine-binding protein from Pseudomonas aeruginosa (strain ATCC 15692 / DSM 22644 / CIP 104116 / JCM 14847 / LMG 12228 / 1C / PRS 101 / PAO1).